A 240-amino-acid polypeptide reads, in one-letter code: UPF0309 protein in nagA 3'region (240 aa).

Positions 31-206 (IVKRLVQGGI…CAQIIEILHE (176 aa)) constitute an SIS domain.

Belongs to the UPF0309 family.

The sequence is that of UPF0309 protein in nagA 3'region from Lysinibacillus sphaericus (Bacillus sphaericus).